Consider the following 537-residue polypeptide: Tegument protein BRRF2 (537 aa).

2 disordered regions span residues leucine 325–aspartate 474 and glycine 486–isoleucine 537. Residues lysine 334 to asparagine 347 show a composition bias toward polar residues. The span at serine 423–glycine 441 shows a compositional bias: low complexity. The span at aspartate 492–glutamate 517 shows a compositional bias: acidic residues.

This sequence belongs to the lymphocryptovirus BRRF2 family.

It is found in the virion tegument. In Homo sapiens (Human), this protein is Tegument protein BRRF2.